The following is a 213-amino-acid chain: 3-isopropylmalate dehydratase small subunit (213 aa).

Belongs to the LeuD family. LeuD type 1 subfamily. As to quaternary structure, heterodimer of LeuC and LeuD.

The enzyme catalyses (2R,3S)-3-isopropylmalate = (2S)-2-isopropylmalate. Its pathway is amino-acid biosynthesis; L-leucine biosynthesis; L-leucine from 3-methyl-2-oxobutanoate: step 2/4. Catalyzes the isomerization between 2-isopropylmalate and 3-isopropylmalate, via the formation of 2-isopropylmaleate. This chain is 3-isopropylmalate dehydratase small subunit, found in Neisseria meningitidis serogroup C / serotype 2a (strain ATCC 700532 / DSM 15464 / FAM18).